The primary structure comprises 105 residues: Pyrimidine/purine nucleoside phosphorylase (105 aa).

The protein belongs to the nucleoside phosphorylase PpnP family.

The enzyme catalyses a purine D-ribonucleoside + phosphate = a purine nucleobase + alpha-D-ribose 1-phosphate. It catalyses the reaction adenosine + phosphate = alpha-D-ribose 1-phosphate + adenine. It carries out the reaction cytidine + phosphate = cytosine + alpha-D-ribose 1-phosphate. The catalysed reaction is guanosine + phosphate = alpha-D-ribose 1-phosphate + guanine. The enzyme catalyses inosine + phosphate = alpha-D-ribose 1-phosphate + hypoxanthine. It catalyses the reaction thymidine + phosphate = 2-deoxy-alpha-D-ribose 1-phosphate + thymine. It carries out the reaction uridine + phosphate = alpha-D-ribose 1-phosphate + uracil. The catalysed reaction is xanthosine + phosphate = alpha-D-ribose 1-phosphate + xanthine. Functionally, catalyzes the phosphorolysis of diverse nucleosides, yielding D-ribose 1-phosphate and the respective free bases. Can use uridine, adenosine, guanosine, cytidine, thymidine, inosine and xanthosine as substrates. Also catalyzes the reverse reactions. This is Pyrimidine/purine nucleoside phosphorylase from Cupriavidus necator (strain ATCC 17699 / DSM 428 / KCTC 22496 / NCIMB 10442 / H16 / Stanier 337) (Ralstonia eutropha).